Consider the following 346-residue polypeptide: MKIKKAAVIGAGVMGAAIAAQLANAGIPVLLLDIVLPDKPDRNFLAKAGVERALKARPAAFMDNDRARLIEVGNLEDDLKKLKDVDWVLEAIIEKLDAKHDLWEKVEKVVKKTAIISSNSSGIPMHLQIEGRSEDFQRRFVGAHFFNPPRYLHLLEVIPTDKTDPQVVKDFSEFAEHTLGKGVVVANDVPGFVANRIGVYGIVRAMQHMEKYGLTPAEVDQLTGPALGRASSATFRTADLSGLDIISHVATDIGGVTPDDEDFTLTESFKNMVAGGILGDKSGSGFYKKTKDEKARPRFSTTCKPANTKTRARCACPPWTPRANLSPSATPCTPWKARKATSCAPP.

Residues 322 to 346 form a disordered region; that stretch reads RANLSPSATPCTPWKARKATSCAPP.

It belongs to the 3-hydroxyacyl-CoA dehydrogenase family.

The catalysed reaction is a (3S)-3-hydroxyacyl-CoA + NAD(+) = a 3-oxoacyl-CoA + NADH + H(+). In Deinococcus radiodurans (strain ATCC 13939 / DSM 20539 / JCM 16871 / CCUG 27074 / LMG 4051 / NBRC 15346 / NCIMB 9279 / VKM B-1422 / R1), this protein is Probable 3-hydroxyacyl-CoA dehydrogenase.